The chain runs to 463 residues: ATP-dependent protease ATPase subunit HslU (463 aa).

ATP-binding positions include Ile19, Gly61–Glu66, Asp277, Glu341, and Arg413.

This sequence belongs to the ClpX chaperone family. HslU subfamily. As to quaternary structure, a double ring-shaped homohexamer of HslV is capped on each side by a ring-shaped HslU homohexamer. The assembly of the HslU/HslV complex is dependent on binding of ATP.

It is found in the cytoplasm. Functionally, ATPase subunit of a proteasome-like degradation complex; this subunit has chaperone activity. The binding of ATP and its subsequent hydrolysis by HslU are essential for unfolding of protein substrates subsequently hydrolyzed by HslV. HslU recognizes the N-terminal part of its protein substrates and unfolds these before they are guided to HslV for hydrolysis. The polypeptide is ATP-dependent protease ATPase subunit HslU (Bacillus cereus (strain ATCC 14579 / DSM 31 / CCUG 7414 / JCM 2152 / NBRC 15305 / NCIMB 9373 / NCTC 2599 / NRRL B-3711)).